A 502-amino-acid polypeptide reads, in one-letter code: Type-2 serine--tRNA ligase (502 aa).

Ala304 is an L-serine binding site. Zn(2+) is bound at residue Cys306. L-serine is bound at residue Arg336. ATP-binding positions include 336 to 338 (RYE) and 347 to 348 (RV). L-serine contacts are provided by residues 353 to 355 (RVE) and Gln400. Residue Glu355 participates in Zn(2+) binding. Glu432 is a binding site for ATP. Asn435 contacts L-serine. Cys461 is a Zn(2+) binding site. Arg468 contributes to the ATP binding site.

It belongs to the class-II aminoacyl-tRNA synthetase family. Type-2 seryl-tRNA synthetase subfamily. Homodimer. Zn(2+) serves as cofactor.

Its subcellular location is the cytoplasm. The catalysed reaction is tRNA(Ser) + L-serine + ATP = L-seryl-tRNA(Ser) + AMP + diphosphate + H(+). The enzyme catalyses tRNA(Sec) + L-serine + ATP = L-seryl-tRNA(Sec) + AMP + diphosphate + H(+). It participates in aminoacyl-tRNA biosynthesis; selenocysteinyl-tRNA(Sec) biosynthesis; L-seryl-tRNA(Sec) from L-serine and tRNA(Sec): step 1/1. In terms of biological role, catalyzes the attachment of serine to tRNA(Ser). Is also able to aminoacylate tRNA(Sec) with serine, to form the misacylated tRNA L-seryl-tRNA(Sec), which will be further converted into selenocysteinyl-tRNA(Sec). The protein is Type-2 serine--tRNA ligase of Methanococcoides burtonii (strain DSM 6242 / NBRC 107633 / OCM 468 / ACE-M).